A 239-amino-acid polypeptide reads, in one-letter code: Alpha-acetolactate decarboxylase (239 aa).

Belongs to the alpha-acetolactate decarboxylase family.

The enzyme catalyses (2S)-2-acetolactate + H(+) = (R)-acetoin + CO2. Its pathway is polyol metabolism; (R,R)-butane-2,3-diol biosynthesis; (R,R)-butane-2,3-diol from pyruvate: step 2/3. The enzyme is active only in the presence of branched-chain amino acids. Valine results in much higher activation than leucine or isoleucine. In terms of biological role, converts acetolactate into acetoin. Regulates leucine and valine biosynthesis by diverting the flux of alpha-acetolactate towards acetoin when the branched-chain amino acids are present in high concentration. In Streptococcus thermophilus, this protein is Alpha-acetolactate decarboxylase (aldC).